Here is a 180-residue protein sequence, read N- to C-terminus: MLEKDIKKILFSQEDIVTKTKELGQQLTKDYAGKNPLLVCVLKGAVPFMAELIKHIDTHIEMDFMVVSSYGGGTVSSGEVKILKDVDTNIEGRDVIFIEDIIDTGRTLLYLRDMFKYRKASSVKIATLFDKPEGRVVDIEADYVCYDVPNEFIVGFGLDYDEKYRNLPYVGVLKEEIYNK.

Positions 43 and 44 each coordinate diphosphate. Positions 99 and 100 each coordinate Mg(2+). The active-site Proton acceptor is the aspartate 103. GMP contacts are provided by residues lysine 131, 152–153 (FI), and aspartate 159. Arginine 165 serves as a coordination point for diphosphate.

Belongs to the purine/pyrimidine phosphoribosyltransferase family. Mg(2+) is required as a cofactor.

It is found in the cytoplasm. It carries out the reaction IMP + diphosphate = hypoxanthine + 5-phospho-alpha-D-ribose 1-diphosphate. The catalysed reaction is GMP + diphosphate = guanine + 5-phospho-alpha-D-ribose 1-diphosphate. The protein operates within purine metabolism; IMP biosynthesis via salvage pathway; IMP from hypoxanthine: step 1/1. It participates in purine metabolism; GMP biosynthesis via salvage pathway; GMP from guanine: step 1/1. Purine salvage pathway enzyme that catalyzes the transfer of the ribosyl-5-phosphate group from 5-phospho-alpha-D-ribose 1-diphosphate (PRPP) to the N9 position of the 6-oxopurines hypoxanthine and guanine to form the corresponding ribonucleotides IMP (inosine 5'-monophosphate) and GMP (guanosine 5'-monophosphate), with the release of PPi. The sequence is that of Hypoxanthine-guanine phosphoribosyltransferase (hpt) from Streptococcus thermophilus (strain CNRZ 1066).